Consider the following 962-residue polypeptide: SH3 domain-binding protein 4 (962 aa).

The region spanning 55–114 (GNAKEVIAIKDYCPNNFTTLKFSKGDHLYVLDTSGGEWWYAHNTTEMGYIPSSYVQPLNY) is the SH3 1 domain. 5 positions are modified to phosphoserine: S131, S245, S250, S278, and S295. A ZU5 domain is found at 316–453 (TNIVCKLDSS…LEPCMYLAIV (138 aa)). S636 carries the phosphoserine modification. The region spanning 653-723 (SSLKFGKLLK…HTKNVLVVGK (71 aa)) is the SH3 2 domain.

Homodimer or homooligomer. Interacts with DNM2, EPS15, clathrin, the adapter protein complex 2/AP-2 and TFRC. Interacts with the Rag GTPases RRAGA, RRAGB, RRAGC and RRAGD; the interaction is most probably direct, preferentially occurs with their inactive GDP-bound form and is negatively regulated by amino acids. Post-translationally, phosphorylated upon EGF stimulation. Phosphorylation prevents interaction with DNM2.

The protein resides in the membrane. It is found in the clathrin-coated pit. It localises to the cytoplasmic vesicle. Its subcellular location is the clathrin-coated vesicle. The protein localises to the nucleus. In terms of biological role, may function in transferrin receptor internalization at the plasma membrane through a cargo-specific control of clathrin-mediated endocytosis. Alternatively, may act as a negative regulator of the amino acid-induced TOR signaling by inhibiting the formation of active Rag GTPase complexes. Preferentially binds inactive Rag GTPase complexes and prevents their interaction with the mTORC1 complex inhibiting its relocalization to lysosomes and its activation. Thereby, may indirectly regulate cell growth, proliferation and autophagy. This is SH3 domain-binding protein 4 (Sh3bp4) from Mus musculus (Mouse).